A 198-amino-acid polypeptide reads, in one-letter code: MKLYSLSVLYKGDPKAVLLKAAYDVSSFSFFQRSSVQEFMTFTSQLIVERSGKGSRASVKEQEYLCHVYVRSDSLAGVVIADSEYPSRVAFTLLEKVLDEFSKQVDRIDWPVGSPATIQYTGLDDHLSKYQNPREADPMSKVQAELDETKIILHNTMESLLERGEKLDDLVSKSEVLGTQSKAFYKTARKQNSCCAIM.

Residues 8 to 131 (VLYKGDPKAV…GLDDHLSKYQ (124 aa)) enclose the Longin domain. Positions 138-198 (PMSKVQAELD…RKQNSCCAIM (61 aa)) constitute a v-SNARE coiled-coil homology domain. Ser-159 bears the Phosphoserine mark. The S-palmitoyl cysteine moiety is linked to residue Cys-194. Cys-195 is subject to Cysteine methyl ester. A lipid anchor (S-farnesyl cysteine) is attached at Cys-195. Positions 196–198 (AIM) are cleaved as a propeptide — removed in mature form.

Belongs to the synaptobrevin family. Identified in 2 different SNARE complexes; the first one composed of GOSR1, GOSR2 and STX5 and the second one composed of BET1L, GOSR1 and STX5. Palmitoylated; catalyzes its own palmitoylation. Palmitoylation is required for Golgi targeting. Post-translationally, farnesylation is required for Golgi targeting.

It is found in the cytoplasm. Its subcellular location is the cytosol. It localises to the cytoplasmic vesicle membrane. The protein resides in the golgi apparatus membrane. Its function is as follows. Vesicular soluble NSF attachment protein receptor (v-SNARE) mediating vesicle docking and fusion to a specific acceptor cellular compartment. Functions in endoplasmic reticulum to Golgi transport; as part of a SNARE complex composed of GOSR1, GOSR2 and STX5. Functions in early/recycling endosome to TGN transport; as part of a SNARE complex composed of BET1L, GOSR1 and STX5. Has a S-palmitoyl transferase activity. The chain is Synaptobrevin homolog YKT6 (Ykt6) from Mus musculus (Mouse).